A 223-amino-acid polypeptide reads, in one-letter code: UPF0758 protein Tgr7_0100 (223 aa).

The MPN domain maps to 102–223 (ALTSPDDTRR…LVSFAERGLL (122 aa)). 3 residues coordinate Zn(2+): H173, H175, and D186. The JAMM motif motif lies at 173 to 186 (HNHPSGVAEPSRSD).

It belongs to the UPF0758 family.

The polypeptide is UPF0758 protein Tgr7_0100 (Thioalkalivibrio sulfidiphilus (strain HL-EbGR7)).